Here is a 55-residue protein sequence, read N- to C-terminus: uncharacterized protein (55 aa).

This is an uncharacterized protein from Bacillus subtilis (strain 168).